A 794-amino-acid polypeptide reads, in one-letter code: Lon protease (794 aa).

The 194-residue stretch at 29 to 222 folds into the Lon N-terminal domain; the sequence is VPLLPLRGVL…TLISIIQDEQ (194 aa). 374 to 381 contacts ATP; it reads GPPGVGKT. The Lon proteolytic domain occupies 610 to 791; sequence TDQVGMATGL…DEVLEHALVG (182 aa). Active-site residues include Ser-697 and Lys-740.

It belongs to the peptidase S16 family. Homohexamer. Organized in a ring with a central cavity.

The protein resides in the cytoplasm. The catalysed reaction is Hydrolysis of proteins in presence of ATP.. ATP-dependent serine protease that mediates the selective degradation of mutant and abnormal proteins as well as certain short-lived regulatory proteins. Required for cellular homeostasis and for survival from DNA damage and developmental changes induced by stress. Degrades polypeptides processively to yield small peptide fragments that are 5 to 10 amino acids long. Binds to DNA in a double-stranded, site-specific manner. The sequence is that of Lon protease from Bacillus thuringiensis (strain Al Hakam).